Here is a 596-residue protein sequence, read N- to C-terminus: Aspartate--tRNA(Asp/Asn) ligase (596 aa).

Residue Glu-175 participates in L-aspartate binding. Positions 199-202 (QQYK) are aspartate. L-aspartate is bound by residues Arg-221 and His-454. 221 to 223 (RDE) contributes to the ATP binding site. Position 488 (Glu-488) interacts with ATP. Arg-495 serves as a coordination point for L-aspartate. 540 to 543 (GVDR) provides a ligand contact to ATP.

It belongs to the class-II aminoacyl-tRNA synthetase family. Type 1 subfamily. Homodimer.

The protein localises to the cytoplasm. The enzyme catalyses tRNA(Asx) + L-aspartate + ATP = L-aspartyl-tRNA(Asx) + AMP + diphosphate. Functionally, aspartyl-tRNA synthetase with relaxed tRNA specificity since it is able to aspartylate not only its cognate tRNA(Asp) but also tRNA(Asn). Reaction proceeds in two steps: L-aspartate is first activated by ATP to form Asp-AMP and then transferred to the acceptor end of tRNA(Asp/Asn). The sequence is that of Aspartate--tRNA(Asp/Asn) ligase from Bartonella bacilliformis (strain ATCC 35685 / KC583 / Herrer 020/F12,63).